The following is an 858-amino-acid chain: Heat shock protein 105 kDa (858 aa).

An N-acetylserine modification is found at Ser-2. Lys-471 is modified (N6-acetyllysine). 2 disordered regions span residues 500 to 585 and 801 to 858; these read KVPT…PPEA and VNQP…MDLD. The segment covering 504 to 515 has biased composition (acidic residues); it reads EEDDGSSVEADM. A phosphoserine mark is found at Ser-509 and Ser-510. A compositionally biased stretch (polar residues) spans 533–549; the sequence is QQDNSEAGTQPQVQTDG. At Ser-558 the chain carries Phosphoserine. Basic and acidic residues-rich tracts occupy residues 564–585 and 806–815; these read EENK…PPEA and PKIESPKLER. Phosphoserine is present on Ser-810. Thr-816 is subject to Phosphothreonine. Residues 822 to 834 are compositionally biased toward basic and acidic residues; that stretch reads LDKKEDLEGKDNF.

This sequence belongs to the heat shock protein 70 family. Interacts with HSPA8/HSC70. Interacts with HSPA1A (via NBD) and HSPA1B (via NBD). Phosphorylation on Ser-509 may be important for regulation of the HSPA8/HSC70 chaperone activity. In terms of tissue distribution, predominantly expressed in the brain and also found in the liver.

The protein localises to the cytoplasm. Acts as a nucleotide-exchange factor (NEF) for chaperone proteins HSPA1A and HSPA1B, promoting the release of ADP from HSPA1A/B thereby triggering substrate release. Prevents the aggregation of denatured proteins in cells under severe stress, on which the ATP levels decrease markedly. Inhibits HSPA8/HSC70 ATPase and chaperone activities. In Cricetulus griseus (Chinese hamster), this protein is Heat shock protein 105 kDa (HSPH1).